A 59-amino-acid chain; its full sequence is MIDSAKETDRPKHRKRDEVIAFLILAVVIWPILSVAIVGGYGFLVWMSQIIFGPPGPMH.

Residues 1–18 are Cytoplasmic-facing; that stretch reads MIDSAKETDRPKHRKRDE. Residues 19–43 traverse the membrane as a helical segment; sequence VIAFLILAVVIWPILSVAIVGGYGF. The Periplasmic portion of the chain corresponds to 44–59; that stretch reads LVWMSQIIFGPPGPMH.

The protein resides in the cell inner membrane. Its function is as follows. May be involved in mediating interactions between NapC and a quinol oxidase. The polypeptide is Protein NapE (napE) (Paracoccus pantotrophus (Thiosphaera pantotropha)).